The primary structure comprises 280 residues: uncharacterized protein (280 aa).

A run of 7 helical transmembrane segments spans residues 6 to 26 (YLVI…TPLV), 38 to 58 (VLAI…YLFP), 79 to 99 (IFLL…VFLK), 105 to 125 (GVLA…ELIF), 144 to 164 (NQIY…IILW), 171 to 191 (ISFF…ALMV), and 231 to 251 (LVFI…TLFA).

It localises to the cell membrane. This is an uncharacterized protein from Mycoplasma genitalium (strain ATCC 33530 / DSM 19775 / NCTC 10195 / G37) (Mycoplasmoides genitalium).